A 130-amino-acid chain; its full sequence is Large ribosomal subunit protein bL17 (130 aa).

The protein belongs to the bacterial ribosomal protein bL17 family. Part of the 50S ribosomal subunit. Contacts protein L32.

This chain is Large ribosomal subunit protein bL17, found in Buchnera aphidicola subsp. Acyrthosiphon pisum (strain APS) (Acyrthosiphon pisum symbiotic bacterium).